The sequence spans 359 residues: Dual-specificity RNA methyltransferase RlmN (359 aa).

The Proton acceptor role is filled by glutamate 90. Residues 109–342 (HQERYTVCIS…CTIRESKGLD (234 aa)) form the Radical SAM core domain. Cysteine 116 and cysteine 347 are oxidised to a cystine. Positions 123, 127, and 130 each coordinate [4Fe-4S] cluster. Residues 173 to 174 (GE), serine 205, 228 to 230 (SLH), and asparagine 304 contribute to the S-adenosyl-L-methionine site. The S-methylcysteine intermediate role is filled by cysteine 347.

This sequence belongs to the radical SAM superfamily. RlmN family. It depends on [4Fe-4S] cluster as a cofactor.

The protein localises to the cytoplasm. The enzyme catalyses adenosine(2503) in 23S rRNA + 2 reduced [2Fe-2S]-[ferredoxin] + 2 S-adenosyl-L-methionine = 2-methyladenosine(2503) in 23S rRNA + 5'-deoxyadenosine + L-methionine + 2 oxidized [2Fe-2S]-[ferredoxin] + S-adenosyl-L-homocysteine. The catalysed reaction is adenosine(37) in tRNA + 2 reduced [2Fe-2S]-[ferredoxin] + 2 S-adenosyl-L-methionine = 2-methyladenosine(37) in tRNA + 5'-deoxyadenosine + L-methionine + 2 oxidized [2Fe-2S]-[ferredoxin] + S-adenosyl-L-homocysteine. In terms of biological role, specifically methylates position 2 of adenine 2503 in 23S rRNA and position 2 of adenine 37 in tRNAs. m2A2503 modification seems to play a crucial role in the proofreading step occurring at the peptidyl transferase center and thus would serve to optimize ribosomal fidelity. The protein is Dual-specificity RNA methyltransferase RlmN of Sulfurovum sp. (strain NBC37-1).